Consider the following 109-residue polypeptide: Cell cycle protein GpsB (109 aa).

Positions 36 to 63 (IKDYETYAALVKSLRQEIADLKEELTRK) form a coiled coil.

Belongs to the GpsB family. As to quaternary structure, forms polymers through the coiled coil domains. Interacts with PBP1, MreC and EzrA.

It localises to the cytoplasm. Its function is as follows. Divisome component that associates with the complex late in its assembly, after the Z-ring is formed, and is dependent on DivIC and PBP2B for its recruitment to the divisome. Together with EzrA, is a key component of the system that regulates PBP1 localization during cell cycle progression. Its main role could be the removal of PBP1 from the cell pole after pole maturation is completed. Also contributes to the recruitment of PBP1 to the division complex. Not essential for septum formation. The sequence is that of Cell cycle protein GpsB from Streptococcus pneumoniae serotype 4 (strain ATCC BAA-334 / TIGR4).